A 572-amino-acid polypeptide reads, in one-letter code: Formate--tetrahydrofolate ligase (572 aa).

81–88 provides a ligand contact to ATP; it reads TPAGEGKT.

The protein belongs to the formate--tetrahydrofolate ligase family.

It carries out the reaction (6S)-5,6,7,8-tetrahydrofolate + formate + ATP = (6R)-10-formyltetrahydrofolate + ADP + phosphate. It participates in one-carbon metabolism; tetrahydrofolate interconversion. This is Formate--tetrahydrofolate ligase from Granulibacter bethesdensis (strain ATCC BAA-1260 / CGDNIH1).